A 476-amino-acid polypeptide reads, in one-letter code: Calcium/calmodulin-dependent protein kinase type 1G (476 aa).

One can recognise a Protein kinase domain in the interval 23-277 (FIFMEVLGSG…CEKALRHPWI (255 aa)). ATP contacts are provided by residues 29-37 (LGSGAFSEV) and K52. D143 acts as the Proton acceptor in catalysis. Residues 277–317 (IDGNTALHRDIYPSVSLQIQKNFAKSKWRQAFNAAAVVHHM) are autoinhibitory domain. A calmodulin-binding region spans residues 297 to 318 (KNFAKSKWRQAFNAAAVVHHMR). The segment at 326–387 (SPSVRQEVEN…SSRPSAPGGR (62 aa)) is disordered.

It belongs to the protein kinase superfamily. CAMK Ser/Thr protein kinase family. CaMK subfamily. Prenylated on Cys-473.

It localises to the cytoplasm. The protein resides in the golgi apparatus membrane. Its subcellular location is the cell membrane. It catalyses the reaction L-seryl-[protein] + ATP = O-phospho-L-seryl-[protein] + ADP + H(+). It carries out the reaction L-threonyl-[protein] + ATP = O-phospho-L-threonyl-[protein] + ADP + H(+). Activated by Ca(2+)/calmodulin. Binding of calmodulin is thought to result in a conformational change and leads to activation through phosphorylation by CAMKK1. Its function is as follows. Calcium/calmodulin-dependent protein kinase belonging to a proposed calcium-triggered signaling cascade. In vitro phosphorylates transcription factor CREB1. The sequence is that of Calcium/calmodulin-dependent protein kinase type 1G (Camk1g) from Rattus norvegicus (Rat).